The following is a 627-amino-acid chain: tRNA uridine 5-carboxymethylaminomethyl modification enzyme MnmG (627 aa).

FAD is bound by residues 13–18 (GGGHAG), valine 125, and serine 180. 274 to 288 (GPRYCPSIEDKVVRF) is an NAD(+) binding site. Glutamine 371 provides a ligand contact to FAD.

The protein belongs to the MnmG family. In terms of assembly, homodimer. Heterotetramer of two MnmE and two MnmG subunits. The cofactor is FAD.

The protein localises to the cytoplasm. Functionally, NAD-binding protein involved in the addition of a carboxymethylaminomethyl (cmnm) group at the wobble position (U34) of certain tRNAs, forming tRNA-cmnm(5)s(2)U34. The protein is tRNA uridine 5-carboxymethylaminomethyl modification enzyme MnmG of Francisella tularensis subsp. tularensis (strain FSC 198).